The following is a 542-amino-acid chain: Probable folate-biopterin transporter 8, chloroplastic (542 aa).

Residues 1–78 (MERIMINPLL…GVSEFEETAR (78 aa)) constitute a chloroplast transit peptide. Residues 24-45 (LSSIHRQQQQQERQSNNNTLFM) form a disordered region. Helical transmembrane passes span 103-123 (FPWL…PSTL), 132-152 (LPMV…IGSG), 155-175 (VPYI…MGIF), 181-201 (VLPS…ITEV), 223-243 (ALMA…YLLL), 246-266 (PPKI…VVSL), 308-328 (LIWA…VFCY), 338-358 (SVIG…TVVY), 369-389 (PLIH…YILV), 404-424 (VLCF…PFAV), 446-466 (LCLS…LIGI), and 477-497 (GILI…LVPM). The disordered stretch occupies residues 506-542 (GKRGISKRSRRNRRVGRVVDKESVTYRRERESEEAQR). The segment covering 509–521 (GISKRSRRNRRVG) has biased composition (basic residues). Positions 522–542 (RVVDKESVTYRRERESEEAQR) are enriched in basic and acidic residues.

This sequence belongs to the major facilitator superfamily. Folate-biopterin transporter (TC 2.A.71) family.

The protein resides in the plastid. The protein localises to the chloroplast membrane. Could mediate folate transport. The sequence is that of Probable folate-biopterin transporter 8, chloroplastic from Arabidopsis thaliana (Mouse-ear cress).